The primary structure comprises 340 residues: Gigasin-2 (340 aa).

The first 21 residues, 1-21 (MNKMSPLYVLALCCLATTVFA), serve as a signal peptide directing secretion. EGF-like domains lie at 22–57 (KYDC…EDCG) and 65–97 (TAAN…DMCE). 6 disulfides stabilise this stretch: C25-C39, C33-C45, C47-C56, C69-C79, C73-C85, and C87-C96.

Component of the organic matrix of calcified shell layers.

This Magallana gigas (Pacific oyster) protein is Gigasin-2.